Consider the following 462-residue polypeptide: Glycine--tRNA ligase (462 aa).

Positions 98 and 174 each coordinate substrate. ATP is bound by residues 206–208, 216–221, 290–291, and 334–337; these read RNE, FRTREF, EL, and GADR. Residue 221–225 coordinates substrate; that stretch reads FEQME. 330–334 contacts substrate; the sequence is EPSLG.

The protein belongs to the class-II aminoacyl-tRNA synthetase family. Homodimer.

The protein resides in the cytoplasm. The enzyme catalyses tRNA(Gly) + glycine + ATP = glycyl-tRNA(Gly) + AMP + diphosphate. Functionally, catalyzes the attachment of glycine to tRNA(Gly). The chain is Glycine--tRNA ligase from Lachnospira eligens (strain ATCC 27750 / DSM 3376 / VPI C15-48 / C15-B4) (Eubacterium eligens).